The following is a 101-amino-acid chain: Small ribosomal subunit protein uS14 (101 aa).

It belongs to the universal ribosomal protein uS14 family. As to quaternary structure, part of the 30S ribosomal subunit. Contacts proteins S3 and S10.

Binds 16S rRNA, required for the assembly of 30S particles and may also be responsible for determining the conformation of the 16S rRNA at the A site. The chain is Small ribosomal subunit protein uS14 from Buchnera aphidicola subsp. Acyrthosiphon pisum (strain APS) (Acyrthosiphon pisum symbiotic bacterium).